The primary structure comprises 260 residues: Cytosolic Fe-S cluster assembly factor Nubp2 homolog (260 aa).

Position 14-21 (14-21 (GKGGVGKS)) interacts with ATP. [4Fe-4S] cluster-binding residues include C188 and C191.

The protein belongs to the Mrp/NBP35 ATP-binding proteins family. NUBP2/CFD1 subfamily. Heterotetramer of 2 Nubp1 and 2 Nubp2 chains. [4Fe-4S] cluster is required as a cofactor.

It is found in the cytoplasm. In terms of biological role, component of the cytosolic iron-sulfur (Fe/S) protein assembly (CIA) machinery. Required for maturation of extramitochondrial Fe-S proteins. The Nubp1-Nubp2 heterotetramer forms a Fe-S scaffold complex, mediating the de novo assembly of an Fe-S cluster and its transfer to target apoproteins. This chain is Cytosolic Fe-S cluster assembly factor Nubp2 homolog, found in Drosophila erecta (Fruit fly).